Reading from the N-terminus, the 105-residue chain is uncharacterized protein (105 aa).

The Cupin type-2 domain maps to 33-100; that stretch reads LYALDAGTTD…SEDLRVLVVF (68 aa).

This is an uncharacterized protein from Streptomyces coelicolor (strain ATCC BAA-471 / A3(2) / M145).